The primary structure comprises 123 residues: Small ribosomal subunit protein uS12 (123 aa).

D89 carries the 3-methylthioaspartic acid modification.

The protein belongs to the universal ribosomal protein uS12 family. As to quaternary structure, part of the 30S ribosomal subunit. Contacts proteins S8 and S17. May interact with IF1 in the 30S initiation complex.

With S4 and S5 plays an important role in translational accuracy. Its function is as follows. Interacts with and stabilizes bases of the 16S rRNA that are involved in tRNA selection in the A site and with the mRNA backbone. Located at the interface of the 30S and 50S subunits, it traverses the body of the 30S subunit contacting proteins on the other side and probably holding the rRNA structure together. The combined cluster of proteins S8, S12 and S17 appears to hold together the shoulder and platform of the 30S subunit. The polypeptide is Small ribosomal subunit protein uS12 (Chelativorans sp. (strain BNC1)).